Reading from the N-terminus, the 541-residue chain is MCISLHLTVYRSNKCLLLIFIIPISWNLLIKNILFAFGLSSVLWLAKTIIHLLSSLNSSQVMIYSSYYMMGETFVNRFMYMMLGFISSMVLLIMSSDGLSLMLGWDGLGITSYLLIMFYKNYNSSSSGMITILSNRVGDVLILWSLGLMFYSKSWDYMFLSYFSLSIMLLFILSSFTKSAQLPFSAWLPAAMAAPTPVSSLVHSSTLVTAGIYLMIRLSPSFEESGCFLLVVMGALTSFFSGLAAFGENDLKRVIALSTLSQLGVMMFSLGLGLTLFCYFHLFAHALFKALLFMCSGVVIHSLGVQDNRRMGGVSSMLPYTSYIILVCSLSLMGFPYLSGFFSKDLIIESSESLCMLFPSVLMLVSCLLTSTYSSRIAMVCLCSYNYNLSCQYSDEEGEYLTPLFVLYWGAVMGGYIFLLMFSGGDVSIILGPLKSFLLLSLITVGVILPYFVKSFSLSLSHYVSSMMFLPFITGRTSFMPLLMGELLYHEGDCGWVEEAGPSLIHHNSLRGSSLFSFLTSSPYKVLILSSLLFTLFMYFY.

The next 16 membrane-spanning stretches (helical) occupy residues 17 to 37 (LLIF…LFAF), 48 to 70 (TIIH…YYMM), 74 to 94 (FVNR…LLIM), 98 to 118 (GLSL…LIMF), 130 to 150 (ITIL…GLMF), 157 to 177 (YMFL…SSFT), 191 to 213 (AMAA…AGIY), 226 to 246 (GCFL…LAAF), 263 to 283 (LGVM…FHLF), 285 to 305 (HALF…SLGV), 322 to 342 (SYII…SGFF), 353 to 373 (SLCM…TSTY), 404 to 424 (LFVL…MFSG), 429 to 449 (IILG…GVIL), 455 to 475 (SFSL…FITG), and 518 to 538 (FLTS…TLFM).

Belongs to the complex I subunit 5 family.

The protein localises to the mitochondrion inner membrane. It catalyses the reaction a ubiquinone + NADH + 5 H(+)(in) = a ubiquinol + NAD(+) + 4 H(+)(out). Core subunit of the mitochondrial membrane respiratory chain NADH dehydrogenase (Complex I) that is believed to belong to the minimal assembly required for catalysis. Complex I functions in the transfer of electrons from NADH to the respiratory chain. The immediate electron acceptor for the enzyme is believed to be ubiquinone. The polypeptide is NADH-ubiquinone oxidoreductase chain 5 (ND5) (Artemia franciscana (Brine shrimp)).